Here is a 512-residue protein sequence, read N- to C-terminus: Endoglucanase 14 (512 aa).

An N-terminal signal peptide occupies residues 1 to 22 (MLAAAIELVVIATSCMVRDAHG). The N-linked (GlcNAc...) asparagine glycan is linked to Asn-76. Catalysis depends on Asp-103, which acts as the Nucleophile. Residues Asn-192 and Asn-215 are each glycosylated (N-linked (GlcNAc...) asparagine). Catalysis depends on residues His-433, Asp-484, and Glu-493.

It belongs to the glycosyl hydrolase 9 (cellulase E) family.

The protein resides in the secreted. It carries out the reaction Endohydrolysis of (1-&gt;4)-beta-D-glucosidic linkages in cellulose, lichenin and cereal beta-D-glucans.. In Oryza sativa subsp. japonica (Rice), this protein is Endoglucanase 14.